We begin with the raw amino-acid sequence, 155 residues long: Small ribosomal subunit protein uS7cz/uS7cy (155 aa).

It belongs to the universal ribosomal protein uS7 family. In terms of assembly, part of the 30S ribosomal subunit.

It is found in the plastid. Its subcellular location is the chloroplast. Its function is as follows. One of the primary rRNA binding proteins, it binds directly to 16S rRNA where it nucleates assembly of the head domain of the 30S subunit. The chain is Small ribosomal subunit protein uS7cz/uS7cy (rps7-A) from Oenothera argillicola (Appalachian evening primrose).